A 115-amino-acid polypeptide reads, in one-letter code: Large ribosomal subunit protein bL20 (115 aa).

This sequence belongs to the bacterial ribosomal protein bL20 family.

Binds directly to 23S ribosomal RNA and is necessary for the in vitro assembly process of the 50S ribosomal subunit. It is not involved in the protein synthesizing functions of that subunit. This Synechococcus sp. (strain CC9902) protein is Large ribosomal subunit protein bL20.